A 444-amino-acid chain; its full sequence is N-succinylarginine dihydrolase (444 aa).

Substrate is bound by residues 19-28 (SGLSVGNIAS), Asn110, and 137-138 (HR). The active site involves Glu174. Arg214 provides a ligand contact to substrate. Residue His250 is part of the active site. Substrate is bound by residues Asp252 and Asn362. The active-site Nucleophile is Cys368.

Belongs to the succinylarginine dihydrolase family. In terms of assembly, homodimer.

It catalyses the reaction N(2)-succinyl-L-arginine + 2 H2O + 2 H(+) = N(2)-succinyl-L-ornithine + 2 NH4(+) + CO2. Its pathway is amino-acid degradation; L-arginine degradation via AST pathway; L-glutamate and succinate from L-arginine: step 2/5. In terms of biological role, catalyzes the hydrolysis of N(2)-succinylarginine into N(2)-succinylornithine, ammonia and CO(2). In Aliivibrio fischeri (strain MJ11) (Vibrio fischeri), this protein is N-succinylarginine dihydrolase.